The sequence spans 221 residues: Probable nicotinate-nucleotide adenylyltransferase (221 aa).

The protein belongs to the NadD family.

The enzyme catalyses nicotinate beta-D-ribonucleotide + ATP + H(+) = deamido-NAD(+) + diphosphate. It participates in cofactor biosynthesis; NAD(+) biosynthesis; deamido-NAD(+) from nicotinate D-ribonucleotide: step 1/1. Catalyzes the reversible adenylation of nicotinate mononucleotide (NaMN) to nicotinic acid adenine dinucleotide (NaAD). The sequence is that of Probable nicotinate-nucleotide adenylyltransferase from Marinomonas sp. (strain MWYL1).